The chain runs to 63 residues: Large ribosomal subunit protein uL29 (63 aa).

Belongs to the universal ribosomal protein uL29 family.

The protein is Large ribosomal subunit protein uL29 of Yersinia enterocolitica serotype O:8 / biotype 1B (strain NCTC 13174 / 8081).